Here is a 264-residue protein sequence, read N- to C-terminus: Electron transfer flavoprotein subunit beta (264 aa).

Residues Ala-6, 36-39 (NEWD), Val-64, 119-122 (GVQS), and 127-130 (YAST) each bind AMP.

As to quaternary structure, heterodimer of an alpha and a beta subunit. Forms a ternary complex with trimethylamine dehydrogenase.

Its function is as follows. Heterodimeric electron transfer flavoprotein that accepts electrons from trimethylamine dehydrogenase. It transfers the electrons to the main respiratory chain via ETF-ubiquinone oxidoreductase (ETF dehydrogenase). EtfB binds an AMP molecule that probably has a purely structural role. In Methylophilus methylotrophus (Bacterium W3A1), this protein is Electron transfer flavoprotein subunit beta (etfB).